The chain runs to 212 residues: Mediator of RNA polymerase II transcription subunit 20 (212 aa).

Belongs to the Mediator complex subunit 20 family. Component of the Mediator complex, which is composed of MED1, MED4, MED6, MED7, MED8, MED9, MED10, MED11, MED12, MED13, MED13L, MED14, MED15, MED16, MED17, MED18, MED19, MED20, MED21, MED22, MED23, MED24, MED25, MED26, MED27, MED29, MED30, MED31, CCNC, CDK8 and CDC2L6/CDK11. The MED12, MED13, CCNC and CDK8 subunits form a distinct module termed the CDK8 module. Mediator containing the CDK8 module is less active than Mediator lacking this module in supporting transcriptional activation. Individual preparations of the Mediator complex lacking one or more distinct subunits have been variously termed ARC, CRSP, DRIP, PC2, SMCC and TRAP. Interacts with PPARG.

The protein resides in the nucleus. Component of the Mediator complex, a coactivator involved in the regulated transcription of nearly all RNA polymerase II-dependent genes. Mediator functions as a bridge to convey information from gene-specific regulatory proteins to the basal RNA polymerase II transcription machinery. Mediator is recruited to promoters by direct interactions with regulatory proteins and serves as a scaffold for the assembly of a functional preinitiation complex with RNA polymerase II and the general transcription factors. The sequence is that of Mediator of RNA polymerase II transcription subunit 20 (Med20) from Rattus norvegicus (Rat).